Consider the following 147-residue polypeptide: MTLFIDADACPVAIREILFRAAQRKQLHLYLVANQRIQTPKSKFIHMVQVGSGFDVADHEIVRRCEADDLIITSDIPLASEVIDKGAKALSPRGELFTPDNIRQRLNIRDFMDTMRSSGIQSGGPPPLSNVDRKNFADHLDRLLAGS.

This sequence belongs to the UPF0178 family.

The polypeptide is UPF0178 protein IL2341 (Idiomarina loihiensis (strain ATCC BAA-735 / DSM 15497 / L2-TR)).